We begin with the raw amino-acid sequence, 90 residues long: MNKTDLIDAIASAAELNKKQAKAALEATLEAISGSLKAGEPVQLIGFGTFKVNSRKARTGRNPQTGAEIKIAASKVPAFVAGKALKDAVK.

This sequence belongs to the bacterial histone-like protein family. Homodimer.

Functionally, histone-like DNA-binding protein which is capable of wrapping DNA to stabilize it, and thus to prevent its denaturation under extreme environmental conditions. The polypeptide is DNA-binding protein HU (hup) (Pasteurella multocida (strain Pm70)).